The primary structure comprises 799 residues: Phosphate transporter PHO1-1 (799 aa).

Over 1–406 the chain is Cytoplasmic; sequence MVKFSKQFEG…TQRKESHTVT (406 aa). The 353-residue stretch at 2-354 folds into the SPX domain; that stretch reads VKFSKQFEGQ…GKQVLSVYLR (353 aa). Residues 170 to 243 are disordered; it reads SLSGHHRAAA…GSLSRQSLGR (74 aa). The segment covering 180–193 has biased composition (low complexity); that stretch reads GDDPSISSSSATSG. The span at 210-222 shows a compositional bias: basic and acidic residues; it reads ESQHETAVMRDPE. The segment covering 234–243 has biased composition (polar residues); sequence GSLSRQSLGR. A helical transmembrane segment spans residues 407–427; that stretch reads FFIGLMTGCFVALFLGYCIMA. The Extracellular portion of the chain corresponds to 428-447; that stretch reads HIAGMYTQRRDSIYMETVYP. The chain crosses the membrane as a helical span at residues 448–468; the sequence is VFSMFSLMFLHLFMYGCNMVA. Topologically, residues 469-492 are cytoplasmic; that stretch reads WRKARINYSFIFEFAAGRELKYRD. Residues 493 to 513 traverse the membrane as a helical segment; that stretch reads VFLVCTASMAVIVGVMFAHLS. The Extracellular segment spans residues 514 to 522; sequence LAVRGFHAQ. Residues 523 to 543 traverse the membrane as a helical segment; sequence AIPGFLLLGFLLLLFCPFNMV. Over 544 to 672 the chain is Cytoplasmic; that stretch reads YRSTRFQFLR…AYEKDRSLGS (129 aa). The EXS domain occupies 608–799; that stretch reads INTKHIRDLA…LPFHEADEED (192 aa). Residues 673 to 693 traverse the membrane as a helical segment; the sequence is LSLLVIVSSSATMYQLYWDFV. At 694 to 718 the chain is on the extracellular side; sequence KDWGLLQPNSKNPWLRNDLILKSKS. The helical transmembrane segment at 719–739 threads the bilayer; that stretch reads IYYLSMGLNLVLRLAWLQTVI. Residues 740–799 are Cytoplasmic-facing; that stretch reads HPNFGSLDSRVTSFFLAALEVIRRGHWNFYRLENEHLNNAGKFRAVKTVPLPFHEADEED.

This sequence belongs to the SYG1 (TC 2.A.94) family. Expressed in roots and flowers.

The protein resides in the cell membrane. May transport inorganic phosphate (Pi). This Oryza sativa subsp. japonica (Rice) protein is Phosphate transporter PHO1-1 (PHO1-1).